The following is a 283-amino-acid chain: Polyamine aminopropyltransferase (283 aa).

Residues E2–K237 form the PABS domain. Q31 provides a ligand contact to S-methyl-5'-thioadenosine. The spermidine site is built by H62 and D86. S-methyl-5'-thioadenosine contacts are provided by residues E106 and E137–G138. D155 (proton acceptor) is an active-site residue. Residue D155 to D158 participates in spermidine binding. P162 lines the S-methyl-5'-thioadenosine pocket.

Belongs to the spermidine/spermine synthase family. Homodimer or homotetramer.

Its subcellular location is the cytoplasm. The enzyme catalyses S-adenosyl 3-(methylsulfanyl)propylamine + putrescine = S-methyl-5'-thioadenosine + spermidine + H(+). It participates in amine and polyamine biosynthesis; spermidine biosynthesis; spermidine from putrescine: step 1/1. Catalyzes the irreversible transfer of a propylamine group from the amino donor S-adenosylmethioninamine (decarboxy-AdoMet) to putrescine (1,4-diaminobutane) to yield spermidine. In Lachnoclostridium phytofermentans (strain ATCC 700394 / DSM 18823 / ISDg) (Clostridium phytofermentans), this protein is Polyamine aminopropyltransferase.